Here is a 92-residue protein sequence, read N- to C-terminus: Small ribosomal subunit protein uS19 (92 aa).

This sequence belongs to the universal ribosomal protein uS19 family.

Functionally, protein S19 forms a complex with S13 that binds strongly to the 16S ribosomal RNA. This chain is Small ribosomal subunit protein uS19, found in Shewanella amazonensis (strain ATCC BAA-1098 / SB2B).